A 328-amino-acid chain; its full sequence is GMP reductase (328 aa).

The active-site Thioimidate intermediate is the cysteine 176. Residue 205-228 (IIADGGIRTHGDIAKSVRFGATMV) participates in NADP(+) binding.

It belongs to the IMPDH/GMPR family. GuaC type 2 subfamily.

The enzyme catalyses IMP + NH4(+) + NADP(+) = GMP + NADPH + 2 H(+). Catalyzes the irreversible NADPH-dependent deamination of GMP to IMP. It functions in the conversion of nucleobase, nucleoside and nucleotide derivatives of G to A nucleotides, and in maintaining the intracellular balance of A and G nucleotides. This chain is GMP reductase, found in Shouchella clausii (strain KSM-K16) (Alkalihalobacillus clausii).